The sequence spans 461 residues: UDP-N-acetylmuramate--L-alanine ligase (461 aa).

ATP is bound at residue 111 to 117 (GAHGKTT).

Belongs to the MurCDEF family.

Its subcellular location is the cytoplasm. It catalyses the reaction UDP-N-acetyl-alpha-D-muramate + L-alanine + ATP = UDP-N-acetyl-alpha-D-muramoyl-L-alanine + ADP + phosphate + H(+). Its pathway is cell wall biogenesis; peptidoglycan biosynthesis. Its function is as follows. Cell wall formation. The chain is UDP-N-acetylmuramate--L-alanine ligase from Pelotomaculum thermopropionicum (strain DSM 13744 / JCM 10971 / SI).